The sequence spans 445 residues: Phosphoglucosamine mutase (445 aa).

Ser-102 acts as the Phosphoserine intermediate in catalysis. Residues Ser-102, Asp-240, Asp-242, and Asp-244 each contribute to the Mg(2+) site. Ser-102 carries the post-translational modification Phosphoserine.

This sequence belongs to the phosphohexose mutase family. The cofactor is Mg(2+). Activated by phosphorylation.

It catalyses the reaction alpha-D-glucosamine 1-phosphate = D-glucosamine 6-phosphate. Catalyzes the conversion of glucosamine-6-phosphate to glucosamine-1-phosphate. The protein is Phosphoglucosamine mutase of Mycobacterium ulcerans (strain Agy99).